The sequence spans 150 residues: Transcriptional regulator MraZ (150 aa).

2 consecutive SpoVT-AbrB domains span residues 7–58 (KEQH…EPEI) and 87–130 (LDSV…SPEK).

It belongs to the MraZ family. Forms oligomers.

Its subcellular location is the cytoplasm. The protein localises to the nucleoid. This is Transcriptional regulator MraZ from Chlorobium phaeobacteroides (strain BS1).